The primary structure comprises 142 residues: Small ribosomal subunit protein uS9 (142 aa).

This sequence belongs to the universal ribosomal protein uS9 family. Component of the small ribosomal subunit. Mature ribosomes consist of a small (40S) and a large (60S) subunit. The 40S subunit contains about 32 different proteins and 1 molecule of RNA (18S). The 60S subunit contains 45 different proteins and 3 molecules of RNA (25S, 5.8S and 5S).

It is found in the cytoplasm. Component of the ribosome, a large ribonucleoprotein complex responsible for the synthesis of proteins in the cell. The small ribosomal subunit (SSU) binds messenger RNAs (mRNAs) and translates the encoded message by selecting cognate aminoacyl-transfer RNA (tRNA) molecules. The large subunit (LSU) contains the ribosomal catalytic site termed the peptidyl transferase center (PTC), which catalyzes the formation of peptide bonds, thereby polymerizing the amino acids delivered by tRNAs into a polypeptide chain. The nascent polypeptides leave the ribosome through a tunnel in the LSU and interact with protein factors that function in enzymatic processing, targeting, and the membrane insertion of nascent chains at the exit of the ribosomal tunnel. This is Small ribosomal subunit protein uS9 (RPS16A) from Candida albicans (strain SC5314 / ATCC MYA-2876) (Yeast).